A 226-amino-acid chain; its full sequence is Large ribosomal subunit protein uL1 (226 aa).

It belongs to the universal ribosomal protein uL1 family. Part of the 50S ribosomal subunit.

Its function is as follows. Binds directly to 23S rRNA. The L1 stalk is quite mobile in the ribosome, and is involved in E site tRNA release. Protein L1 is also a translational repressor protein, it controls the translation of the L11 operon by binding to its mRNA. This Mycoplasma mycoides subsp. mycoides SC (strain CCUG 32753 / NCTC 10114 / PG1) protein is Large ribosomal subunit protein uL1.